A 752-amino-acid polypeptide reads, in one-letter code: Pre-mRNA-processing factor 39 (752 aa).

A disordered region spans residues 1 to 148 (MEDSGESMTG…DPAAPQEPEL (148 aa)). Polar residues predominate over residues 28-42 (TTGTDDVTGLSTSDL). Composition is skewed to low complexity over residues 43–56 (TTEQPPESQEQTQP), 76–94 (QSASPAEPAAENSEQPPES), and 133–148 (EPAAEADPAAPQEPEL). HAT repeat units lie at residues 180–212 (NHLLGSRKAFDAFFLHYPYCYGYWKKYADIERK), 214–246 (GYIQMADEVYRRGLQAIPLSVDLWLHYITFLRE), and 254–289 (EAESRIRASYEHAVLACGTDFRSDRLWEAYIAWETE). A disordered region spans residues 347–374 (NKPSGDEDAETEAPGEELPPGTEDLPDP). Residues 352 to 361 (DEDAETEAPG) show a composition bias toward acidic residues. HAT repeat units follow at residues 408–440 (AFEEGIKRPYFHVKALEKTQLNNWREYLDFELE) and 442–474 (GTPERVVVLFERCLIACALYEEFWIKYAKYLES). Basic and acidic residues predominate over residues 678–699 (SFKRKAENGSEEPDAKRQRTDD). The disordered stretch occupies residues 678–703 (SFKRKAENGSEEPDAKRQRTDDQSVA). The HAT 6 repeat unit spans residues 700–731 (QSVASGQMMDMQANHAGYNYNNWYQYNSWGSQ).

The protein belongs to the PRP39 family.

The protein resides in the nucleus. Functionally, involved in pre-mRNA splicing. In Danio rerio (Zebrafish), this protein is Pre-mRNA-processing factor 39 (prpf39).